A 734-amino-acid polypeptide reads, in one-letter code: Photosystem I P700 chlorophyll a apoprotein A2 (734 aa).

8 helical membrane-spanning segments follow: residues 46–69, 135–158, 175–199, 273–291, 330–353, 369–395, 417–439, and 517–535; these read IFAS…FHVA, LYTG…LHLQ, LNHH…HVAI, IAHH…GHMY, LHFQ…QHMY, AALY…IFFI, AIIS…LYVH, and FLVH…LILV. [4Fe-4S] cluster contacts are provided by Cys-559 and Cys-568. The next 2 helical transmembrane spans lie at 575–596 and 643–665; these read AFYL…YWHW and LSVW…MFLI. 3 residues coordinate chlorophyll a: His-654, Met-662, and Tyr-670. A phylloquinone-binding site is contributed by Trp-671. The helical transmembrane segment at 707 to 727 threads the bilayer; the sequence is LVGLAHFSVGYIFTYAAFLIA.

Belongs to the PsaA/PsaB family. The PsaA/B heterodimer binds the P700 chlorophyll special pair and subsequent electron acceptors. PSI consists of a core antenna complex that captures photons, and an electron transfer chain that converts photonic excitation into a charge separation. The eukaryotic PSI reaction center is composed of at least 11 subunits. It depends on P700 is a chlorophyll a/chlorophyll a' dimer, A0 is one or more chlorophyll a, A1 is one or both phylloquinones and FX is a shared 4Fe-4S iron-sulfur center. as a cofactor.

The protein resides in the plastid. It is found in the chloroplast thylakoid membrane. It catalyses the reaction reduced [plastocyanin] + hnu + oxidized [2Fe-2S]-[ferredoxin] = oxidized [plastocyanin] + reduced [2Fe-2S]-[ferredoxin]. Functionally, psaA and PsaB bind P700, the primary electron donor of photosystem I (PSI), as well as the electron acceptors A0, A1 and FX. PSI is a plastocyanin-ferredoxin oxidoreductase, converting photonic excitation into a charge separation, which transfers an electron from the donor P700 chlorophyll pair to the spectroscopically characterized acceptors A0, A1, FX, FA and FB in turn. Oxidized P700 is reduced on the lumenal side of the thylakoid membrane by plastocyanin. The sequence is that of Photosystem I P700 chlorophyll a apoprotein A2 from Solanum bulbocastanum (Wild potato).